A 403-amino-acid chain; its full sequence is 4-hydroxy-3-methylbut-2-enyl diphosphate reductase (403 aa).

Cys66 lines the [4Fe-4S] cluster pocket. Residue His96 coordinates (2E)-4-hydroxy-3-methylbut-2-enyl diphosphate. Residue His96 participates in dimethylallyl diphosphate binding. His96 provides a ligand contact to isopentenyl diphosphate. Cys157 contacts [4Fe-4S] cluster. (2E)-4-hydroxy-3-methylbut-2-enyl diphosphate is bound at residue His185. Residue His185 participates in dimethylallyl diphosphate binding. An isopentenyl diphosphate-binding site is contributed by His185. The Proton donor role is filled by Glu187. Position 250 (Thr250) interacts with (2E)-4-hydroxy-3-methylbut-2-enyl diphosphate. Cys288 contacts [4Fe-4S] cluster. (2E)-4-hydroxy-3-methylbut-2-enyl diphosphate-binding residues include Ser317, Ser318, Asn319, and Ser379. Residues Ser317, Ser318, Asn319, and Ser379 each contribute to the dimethylallyl diphosphate site. Isopentenyl diphosphate is bound by residues Ser317, Ser318, Asn319, and Ser379.

Belongs to the IspH family. The cofactor is [4Fe-4S] cluster.

The enzyme catalyses isopentenyl diphosphate + 2 oxidized [2Fe-2S]-[ferredoxin] + H2O = (2E)-4-hydroxy-3-methylbut-2-enyl diphosphate + 2 reduced [2Fe-2S]-[ferredoxin] + 2 H(+). It catalyses the reaction dimethylallyl diphosphate + 2 oxidized [2Fe-2S]-[ferredoxin] + H2O = (2E)-4-hydroxy-3-methylbut-2-enyl diphosphate + 2 reduced [2Fe-2S]-[ferredoxin] + 2 H(+). Its pathway is isoprenoid biosynthesis; dimethylallyl diphosphate biosynthesis; dimethylallyl diphosphate from (2E)-4-hydroxy-3-methylbutenyl diphosphate: step 1/1. The protein operates within isoprenoid biosynthesis; isopentenyl diphosphate biosynthesis via DXP pathway; isopentenyl diphosphate from 1-deoxy-D-xylulose 5-phosphate: step 6/6. Its function is as follows. Catalyzes the conversion of 1-hydroxy-2-methyl-2-(E)-butenyl 4-diphosphate (HMBPP) into a mixture of isopentenyl diphosphate (IPP) and dimethylallyl diphosphate (DMAPP). Acts in the terminal step of the DOXP/MEP pathway for isoprenoid precursor biosynthesis. This chain is 4-hydroxy-3-methylbut-2-enyl diphosphate reductase, found in Picosynechococcus sp. (strain ATCC 27264 / PCC 7002 / PR-6) (Agmenellum quadruplicatum).